The primary structure comprises 316 residues: Secondary metabolism regulator laeA (316 aa).

The protein belongs to the methyltransferase superfamily. LaeA methyltransferase family. As to quaternary structure, component of the heterotrimeric velvet complex composed of laeA, ve1 and velB; Ve1 acting as a bridging protein between laeA and velB. Interacts directly with veA.

It is found in the nucleus. The protein resides in the cytoplasm. The catalysed reaction is L-methionyl-[protein] + S-adenosyl-L-methionine = S-methyl-L-methionyl-[protein] + S-adenosyl-L-homocysteine. Methyltransferase that performs automethylation. No other methyl-accepting substrate has been identified yet. Component of the velvet transcription factor complex that acts as a global regulator for secondary metabolite gene expression. Controls the expression of the mycotoxins trichothecenes and zearalenon gene clusters. Negatively controls perithecial induction, but positively controls virulence toward the host plant. This Gibberella zeae (strain ATCC MYA-4620 / CBS 123657 / FGSC 9075 / NRRL 31084 / PH-1) (Wheat head blight fungus) protein is Secondary metabolism regulator laeA.